A 76-amino-acid polypeptide reads, in one-letter code: Omega-scoloptoxin(13)-Ssm2a (76 aa).

Residues Met-1–Ala-22 form the signal peptide.

Contains 4 disulfide bonds. Expressed by the venom gland.

It is found in the secreted. Its function is as follows. Inhibits voltage-gated calcium channel (Cav) currents in DRG neurons (IC(50)=1590 nM). This Scolopendra mutilans (Chinese red-headed centipede) protein is Omega-scoloptoxin(13)-Ssm2a.